The following is a 117-amino-acid chain: Acylphosphatase (117 aa).

Residues 21–107 (RWRFRIRGLV…TGADWFEIRP (87 aa)) enclose the Acylphosphatase-like domain. Active-site residues include arginine 36 and asparagine 54.

It belongs to the acylphosphatase family.

It catalyses the reaction an acyl phosphate + H2O = a carboxylate + phosphate + H(+). The sequence is that of Acylphosphatase (acyP) from Synechococcus sp. (strain RCC307).